The primary structure comprises 182 residues: Inner membrane assembly complex subunit 17 (182 aa).

The N-terminal 45 residues, 1-45, are a transit peptide targeting the mitochondrion; that stretch reads MLKRRSNALITLSRTKLFPITTVAYYHRRLLNQQRRAVSTSPKKE. The Mitochondrial matrix segment spans residues 46–107; it reads IKSLEDLANL…EIPVKRFIRP (62 aa). A helical transmembrane segment spans residues 108–127; sequence LWMFILMGSSVYLLLHFSWW. The stretch at 128–158 forms a coiled coil; that stretch reads KLEHEERESQLKKEVEILEHQLNELIIQDKT. At 128-182 the chain is on the mitochondrial intermembrane side; the sequence is KLEHEERESQLKKEVEILEHQLNELIIQDKTHNTSRGKGSNESTHMKPWYRRWFW.

Belongs to the INA17 family. As to quaternary structure, component of the inner membrane assembly (INA) complex, composed of INA17 and INA22. Interacts with a subset of F(1)F(0)-ATP synthase subunits of the F(1)-domain and the peripheral stalk.

Its subcellular location is the mitochondrion inner membrane. Its function is as follows. Component of the INA complex (INAC) that promotes the biogenesis of mitochondrial F(1)F(0)-ATP synthase. INAC facilitates the assembly of the peripheral stalk and promotes the assembly of the catalytic F(1)-domain with the membrane-embedded F(0)-domain. This Saccharomyces cerevisiae (strain YJM789) (Baker's yeast) protein is Inner membrane assembly complex subunit 17.